A 449-amino-acid polypeptide reads, in one-letter code: Intestinal acid phosphatase (449 aa).

Positions 1–19 (MVSAISIVAIFALEGFVTT) are cleaved as a signal peptide. Over 20–428 (YSDGTKDLVF…TDLNKSSSFA (409 aa)) the chain is Extracellular. H36 functions as the Nucleophile in the catalytic mechanism. D321 (proton donor) is an active-site residue. A helical membrane pass occupies residues 429 to 449 (TVSMLFIAAILAINNNFLGLF).

Belongs to the histidine acid phosphatase family. In terms of assembly, homodimer. The N-terminus is blocked. Expressed in the intestine, specifically on the edge of the gut lumen, in the 14 posterior cells of the intestine.

It is found in the membrane. The enzyme catalyses a phosphate monoester + H2O = an alcohol + phosphate. Functionally, acid phosphatase required for normal growth and development. Specifically required for normal gut differentiation. The chain is Intestinal acid phosphatase from Caenorhabditis elegans.